A 173-amino-acid chain; its full sequence is NADH-ubiquinone oxidoreductase chain 6 (173 aa).

The next 6 membrane-spanning stretches (helical) occupy residues 1–21 (MTYF…AVAS), 27–47 (YGVV…LSLG), 48–68 (VSFV…VVFV), 87–107 (VVGY…VGGF), 113–133 (FGVV…FSGV), and 139–159 (CGVG…FVVL).

It belongs to the complex I subunit 6 family.

It is found in the mitochondrion membrane. It carries out the reaction a ubiquinone + NADH + 5 H(+)(in) = a ubiquinol + NAD(+) + 4 H(+)(out). Its function is as follows. Core subunit of the mitochondrial membrane respiratory chain NADH dehydrogenase (Complex I) that is believed to belong to the minimal assembly required for catalysis. Complex I functions in the transfer of electrons from NADH to the respiratory chain. The immediate electron acceptor for the enzyme is believed to be ubiquinone. This chain is NADH-ubiquinone oxidoreductase chain 6 (MT-ND6), found in Cepphus grylle (Black guillemot).